We begin with the raw amino-acid sequence, 596 residues long: Protein kinase C iota type (596 aa).

The span at 1 to 12 (MPTQRDSSTMSH) shows a compositional bias: polar residues. The disordered stretch occupies residues 1 to 21 (MPTQRDSSTMSHTVACGGGGD). Position 2 is an N-acetylproline (proline 2). A required for interaction with RAB2 region spans residues 2–28 (PTQRDSSTMSHTVACGGGGDHSHQVRV). The regulatory domain stretch occupies residues 2–253 (PTQRDSSTMS…KASSSLGLQD (252 aa)). The residue at position 3 (threonine 3) is a Phosphothreonine. Residues serine 7 and serine 8 each carry the phosphoserine modification. Residue threonine 9 is modified to Phosphothreonine. One can recognise a PB1 domain in the interval 25 to 108 (QVRVKAYYRG…SELLIHVFPC (84 aa)). The interval 72-91 (DEEGDPCTVSSQLELEEAFR) is interaction with PARD6A. Positions 125 to 134 (YRRGARRWRK) match the Pseudosubstrate motif. Residues 140–190 (GHTFQAKRFNRRAHCAICTDRIWGLGRQGYKCINCKLLVHKKCHKLVTIEC) form a Phorbol-ester/DAG-type zinc finger. Residues 254 to 522 (FDLLRVIGRG…FADIQGHPFF (269 aa)) form the Protein kinase domain. An ATP-binding site is contributed by 260–268 (IGRGSYAKV). Phosphotyrosine; by SRC is present on residues tyrosine 265 and tyrosine 280. ATP is bound at residue lysine 283. Tyrosine 334 is modified (phosphotyrosine; by SRC). The active-site Proton acceptor is aspartate 378. Threonine 412 is subject to Phosphothreonine; by PDPK1. In terms of domain architecture, AGC-kinase C-terminal spans 523-594 (RNVDWDMMEQ…INPLLMSAEE (72 aa)). At threonine 564 the chain carries Phosphothreonine.

It belongs to the protein kinase superfamily. AGC Ser/Thr protein kinase family. PKC subfamily. Forms a complex with SQSTM1 and MP2K5. Interacts directly with SQSTM1. Interacts with IKBKB. Interacts with PARD6A, PARD6B and PARD6G. Part of a quaternary complex containing aPKC, PARD3, a PARD6 protein (PARD6A, PARD6B or PARD6G) and a GTPase protein (CDC42 or RAC1). Part of a complex with LLGL1 and PARD6B. Interacts with ADAP1/CENTA1. Interaction with SMG1, through the ZN-finger domain, activates the kinase activity. Interacts with CDK7. Forms a complex with RAB2A and GAPDH involved in recruitment onto the membrane of vesicular tubular clusters (VTCs). Interacts with ECT2 ('Thr-359' phosphorylated form). Interacts with VAMP2. Interacts with WDFY2 (via WD repeats 1-3). In terms of processing, phosphorylation at Thr-412 in the activation loop is not mandatory for activation. Upon neuronal growth factor (NGF) stimulation, phosphorylated by SRC at Tyr-265, Tyr-280 and Tyr-334. Phosphorylation at Tyr-265 facilitates binding to KPNB1/importin-beta regulating entry of PRKCI into the nucleus. Phosphorylation on Tyr-334 is important for NF-kappa-B stimulation. Phosphorylated at Thr-564 during the initial phase of long term potentiation. As to expression, expressed in dorsal hippocampus (at protein level).

The protein resides in the cytoplasm. It is found in the membrane. Its subcellular location is the endosome. The protein localises to the nucleus. The catalysed reaction is L-seryl-[protein] + ATP = O-phospho-L-seryl-[protein] + ADP + H(+). It carries out the reaction L-threonyl-[protein] + ATP = O-phospho-L-threonyl-[protein] + ADP + H(+). With respect to regulation, atypical PKCs (PRKCI and PRKCZ) exhibit an elevated basal enzymatic activity (that may be due to the interaction with SMG1 or SQSTM1) and are not regulated by diacylglycerol, phosphatidylserine, phorbol esters or calcium ions. Two specific sites, Thr-412 (activation loop of the kinase domain) and Thr-564 (turn motif), need to be phosphorylated for its full activation. Might also be a target for novel lipid activators that are elevated during nutrient-stimulated insulin secretion. Calcium- and diacylglycerol-independent serine/ threonine-protein kinase that plays a general protective role against apoptotic stimuli, is involved in NF-kappa-B activation, cell survival, differentiation and polarity, and contributes to the regulation of microtubule dynamics in the early secretory pathway. Is necessary for BCR-ABL oncogene-mediated resistance to apoptotic drug in leukemia cells, protecting leukemia cells against drug-induced apoptosis. In cultured neurons, prevents amyloid beta protein-induced apoptosis by interrupting cell death process at a very early step. In glioblastoma cells, may function downstream of phosphatidylinositol 3-kinase (PI3K) and PDPK1 in the promotion of cell survival by phosphorylating and inhibiting the pro-apoptotic factor BAD. Can form a protein complex in non-small cell lung cancer (NSCLC) cells with PARD6A and ECT2 and regulate ECT2 oncogenic activity by phosphorylation, which in turn promotes transformed growth and invasion. In response to nerve growth factor (NGF), acts downstream of SRC to phosphorylate and activate IRAK1, allowing the subsequent activation of NF-kappa-B and neuronal cell survival. Functions in the organization of the apical domain in epithelial cells by phosphorylating EZR. This step is crucial for activation and normal distribution of EZR at the early stages of intestinal epithelial cell differentiation. Forms a protein complex with LLGL1 and PARD6B independently of PARD3 to regulate epithelial cell polarity. Plays a role in microtubule dynamics in the early secretory pathway through interaction with RAB2A and GAPDH and recruitment to vesicular tubular clusters (VTCs). In human coronary artery endothelial cells (HCAEC), is activated by saturated fatty acids and mediates lipid-induced apoptosis. Downstream of PI3K is required for insulin-stimulated glucose transport. Activates RAB4A and promotes its association with KIF3A which is required for the insulin-induced SLC2A4/GLUT4 translocation in adipocytes. Is essential in early embryogenesis and development of differentiating photoreceptors by playing a role in the establishment of epithelial and neuronal polarity. Involved in early synaptic long term potentiation phase in CA1 hippocampal cells and short term memory formation. This is Protein kinase C iota type (Prkci) from Rattus norvegicus (Rat).